The primary structure comprises 135 residues: Thioredoxin H5 (135 aa).

The Thioredoxin domain maps to 13-128 (EHLDYSGGNV…LQEKFEQLNR (116 aa)). Catalysis depends on nucleophile residues Cys-54 and Cys-57. Cys-54 and Cys-57 are oxidised to a cystine.

Belongs to the thioredoxin family. Plant H-type subfamily.

The protein localises to the cytoplasm. In terms of biological role, probable thiol-disulfide oxidoreductase that may be involved in the redox regulation of a number of cytosolic enzymes. This chain is Thioredoxin H5, found in Oryza sativa subsp. japonica (Rice).